We begin with the raw amino-acid sequence, 141 residues long: MLMPRRMKYRKQQRGRLKGATKGGDYVAFGDFGLVALEPAWITAQQIEAARVAMVRHFRRGGKIFIRIFPDKPYTKKPLEVRMGKGKGNVEGYVAVVKPGRVMFEVAGVTEEQAMEALRIAGHKLPIKTKIVRRDAYDEAQ.

This sequence belongs to the universal ribosomal protein uL16 family. In terms of assembly, part of the 50S ribosomal subunit.

In terms of biological role, binds 23S rRNA and is also seen to make contacts with the A and possibly P site tRNAs. In Thermus thermophilus (strain ATCC BAA-163 / DSM 7039 / HB27), this protein is Large ribosomal subunit protein uL16.